The following is a 195-amino-acid chain: FMN-dependent NADH:quinone oxidoreductase 2 (195 aa).

FMN-binding positions include 16 to 18 (SVS) and 85 to 88 (MWNL).

This sequence belongs to the azoreductase type 1 family. Homodimer. It depends on FMN as a cofactor.

The enzyme catalyses 2 a quinone + NADH + H(+) = 2 a 1,4-benzosemiquinone + NAD(+). It catalyses the reaction N,N-dimethyl-1,4-phenylenediamine + anthranilate + 2 NAD(+) = 2-(4-dimethylaminophenyl)diazenylbenzoate + 2 NADH + 2 H(+). Functionally, quinone reductase that provides resistance to thiol-specific stress caused by electrophilic quinones. Its function is as follows. Also exhibits azoreductase activity. Catalyzes the reductive cleavage of the azo bond in aromatic azo compounds to the corresponding amines. The polypeptide is FMN-dependent NADH:quinone oxidoreductase 2 (Photobacterium profundum (strain SS9)).